Consider the following 163-residue polypeptide: uncharacterized protein (163 aa).

The tract at residues 1–54 is disordered; the sequence is MGKSARLRRSQTSSPENVLLGKDSSDDPYRSDSETESNSSSGTESNMSSDSTTS. The segment covering 23–33 has biased composition (basic and acidic residues); sequence DSSDDPYRSDS. The span at 36-52 shows a compositional bias: low complexity; that stretch reads ESNSSSGTESNMSSDST. Residues 69-143 are a coiled coil; the sequence is LRTELAEMEM…VEELESSTRE (75 aa).

This is an uncharacterized protein from Arabidopsis thaliana (Mouse-ear cress).